The sequence spans 882 residues: Alanine--tRNA ligase (882 aa).

His570, His574, Cys672, and His676 together coordinate Zn(2+).

Belongs to the class-II aminoacyl-tRNA synthetase family. It depends on Zn(2+) as a cofactor.

Its subcellular location is the cytoplasm. The catalysed reaction is tRNA(Ala) + L-alanine + ATP = L-alanyl-tRNA(Ala) + AMP + diphosphate. Functionally, catalyzes the attachment of alanine to tRNA(Ala) in a two-step reaction: alanine is first activated by ATP to form Ala-AMP and then transferred to the acceptor end of tRNA(Ala). Also edits incorrectly charged Ser-tRNA(Ala) and Gly-tRNA(Ala) via its editing domain. The polypeptide is Alanine--tRNA ligase (Xanthomonas euvesicatoria pv. vesicatoria (strain 85-10) (Xanthomonas campestris pv. vesicatoria)).